A 419-amino-acid polypeptide reads, in one-letter code: Elongation factor Tu, chloroplastic (419 aa).

A tr-type G domain is found at 10 to 214 (KPHVNIGTIG…AVDSYIPTPK (205 aa)). The interval 19 to 26 (GHVDHGKT) is G1. 19–26 (GHVDHGKT) provides a ligand contact to GTP. Mg(2+) is bound at residue threonine 26. Residues 60 to 64 (GITIN) form a G2 region. A G3 region spans residues 81–84 (DCPG). GTP contacts are provided by residues 81 to 85 (DCPGH) and 136 to 139 (NKED). A G4 region spans residues 136-139 (NKED). A G5 region spans residues 174-176 (SAL).

The protein belongs to the TRAFAC class translation factor GTPase superfamily. Classic translation factor GTPase family. EF-Tu/EF-1A subfamily.

Its subcellular location is the plastid. The protein resides in the chloroplast. The catalysed reaction is GTP + H2O = GDP + phosphate + H(+). GTP hydrolase that promotes the GTP-dependent binding of aminoacyl-tRNA to the A-site of ribosomes during protein biosynthesis. The sequence is that of Elongation factor Tu, chloroplastic (tufA) from Chara vulgaris (Common stonewort).